The following is a 105-amino-acid chain: Phosphoribosyl-AMP cyclohydrolase (105 aa).

Aspartate 72 is a Mg(2+) binding site. A Zn(2+)-binding site is contributed by cysteine 73. Residues aspartate 74 and aspartate 76 each contribute to the Mg(2+) site. Residues cysteine 89 and cysteine 96 each contribute to the Zn(2+) site.

This sequence belongs to the PRA-CH family. In terms of assembly, homodimer. Requires Mg(2+) as cofactor. It depends on Zn(2+) as a cofactor.

The protein localises to the cytoplasm. The enzyme catalyses 1-(5-phospho-beta-D-ribosyl)-5'-AMP + H2O = 1-(5-phospho-beta-D-ribosyl)-5-[(5-phospho-beta-D-ribosylamino)methylideneamino]imidazole-4-carboxamide. Its pathway is amino-acid biosynthesis; L-histidine biosynthesis; L-histidine from 5-phospho-alpha-D-ribose 1-diphosphate: step 3/9. Its function is as follows. Catalyzes the hydrolysis of the adenine ring of phosphoribosyl-AMP. The polypeptide is Phosphoribosyl-AMP cyclohydrolase (Listeria monocytogenes serovar 1/2a (strain ATCC BAA-679 / EGD-e)).